The primary structure comprises 155 residues: Small ribosomal subunit protein uS9 (155 aa).

Belongs to the universal ribosomal protein uS9 family.

The protein is Small ribosomal subunit protein uS9 of Rhizobium johnstonii (strain DSM 114642 / LMG 32736 / 3841) (Rhizobium leguminosarum bv. viciae).